The sequence spans 209 residues: Protein phosphotransferase ChpT (209 aa).

Histidine 22 bears the Phosphohistidine mark.

Belongs to the ChpT phosphotransferase family. In terms of assembly, homodimer. Forms an asymmetric heterotetramer with CtrA (2:2). There are at least two modes of interaction between ChpT and CtrA, only one of which is competent to catalyze His-Asp phosphoryl transfer. Is phosphorylated by CckA-P on His-22.

It localises to the cytoplasm. Functionally, component of a regulatory phosphorelay system that controls B.abortus cell growth, division, and intracellular survival inside mammalian host cells. This signaling pathway is composed of CckA, ChpT, CtrA and CpdR. ChpT efficiently and specifically shuttles phosphoryl groups from the CckA kinase to the receiver domains of both CtrA and CpdR. Does not bind ATP. Overexpression of chpT results in a defect in cell morphology, DNA content, and intracellular survival in human macrophages. The chain is Protein phosphotransferase ChpT from Brucella abortus (strain 2308).